The sequence spans 252 residues: Cell division protein ZapD (252 aa).

It belongs to the ZapD family. Interacts with FtsZ.

It localises to the cytoplasm. Functionally, cell division factor that enhances FtsZ-ring assembly. Directly interacts with FtsZ and promotes bundling of FtsZ protofilaments, with a reduction in FtsZ GTPase activity. The chain is Cell division protein ZapD from Ralstonia nicotianae (strain ATCC BAA-1114 / GMI1000) (Ralstonia solanacearum).